Here is a 123-residue protein sequence, read N- to C-terminus: Large ribosomal subunit protein uL18 (123 aa).

The protein belongs to the universal ribosomal protein uL18 family. In terms of assembly, part of the 50S ribosomal subunit; part of the 5S rRNA/L5/L18/L25 subcomplex. Contacts the 5S and 23S rRNAs.

Its function is as follows. This is one of the proteins that bind and probably mediate the attachment of the 5S RNA into the large ribosomal subunit, where it forms part of the central protuberance. The chain is Large ribosomal subunit protein uL18 from Bifidobacterium adolescentis (strain ATCC 15703 / DSM 20083 / NCTC 11814 / E194a).